The following is a 98-amino-acid chain: Integration host factor subunit beta (98 aa).

Belongs to the bacterial histone-like protein family. In terms of assembly, heterodimer of an alpha and a beta chain.

Functionally, this protein is one of the two subunits of integration host factor, a specific DNA-binding protein that functions in genetic recombination as well as in transcriptional and translational control. The chain is Integration host factor subunit beta from Pseudomonas putida (strain W619).